Consider the following 414-residue polypeptide: MRPRTHGAPPRNIMSTIPKWFKGAPFGVQSHRFDVSAVYPNQKKFSTFTEAPYSRHHSVELSHIGPGTYNSKDTCFSKKFLEQKLGSGWSQAHEATRLTQLPHFHYQAIKKEKEQQVHKRGPGSYNIKDFITELQKKPQSKRGLLSSGETRFRGFIGNYYPGPGNYGEKGNPYTQLEEKAWNRSHSDGLMCRVSNKPPLFHQGSGLGPGTYTIKSDLETFVKKSTGNRGPYDIFSGERSSPLPYGHYSVQKMKPKELTDYKSFLDEMNSQHKKKQGVFSKYPRDPKHPTERIFWTTLSQCPKNMDIAGPGSWLPHETEQKHVNRPPFLLASKRCGLKAYQMILGTWNPVGVGRYLNTTLMESIDRRQRYRSLYMSEPKRYLQDLTRDRLMQKRITPITKGKCRPTVDYNSDPTP.

The sequence is that of Ciliary microtubule-associated protein 2 (Cimap2) from Mus musculus (Mouse).